The chain runs to 512 residues: Dihydroniloticin synthase CYP71CD2 (512 aa).

The helical transmembrane segment at methionine 1–phenylalanine 21 threads the bilayer. Residue asparagine 436 coordinates heme.

This sequence belongs to the cytochrome P450 family. Heme serves as cofactor. As to expression, mainly expressed in petioles and roots, and, to a lower extent, in leaves.

The protein resides in the membrane. It carries out the reaction tirucalla-7,24-dien-3beta-ol + 2 reduced [NADPH--hemoprotein reductase] + 2 O2 = dihydroniloticin + 2 oxidized [NADPH--hemoprotein reductase] + 2 H2O + 2 H(+). It participates in secondary metabolite biosynthesis; terpenoid biosynthesis. Its function is as follows. Monooxygenase involved in the biosynthesis of limonoids triterpene natural products such as azadirachtin, an antifeedant widely used as bioinsecticide, and possessing many medicinal applications including anti-tumoral, anti-malarial, anti-rheumatic, antibacterial, anti-inflammatory, anti-pyretic and diuretic effects. Catalyzes the conversion of tirucalladienol to dihydroniloticin. The chain is Dihydroniloticin synthase CYP71CD2 from Melia azedarach (Chinaberry tree).